The following is a 367-amino-acid chain: MEAKESRPQGFPELKNDTFLRAAWGEETDYTPVWCMRQAGRYLPEFRETRAAQDFFSTCRSPEACCELTLQPLRRFPLDAAIIFSDILVVPQALGMEVTMVPGKGPSFPEPLREERDLERLRDPATVASELGYVFQAITLTRQQLAGRVPLIGFAGAPWTLMTYMVEGGGSSTMSQAKRWLYQRPQASHQLLRILTDALVPYLVGQVAAGAQALQLFESHAGHLGPQLFSKFALPYIRDVSKRVKAGLQEAGLAPVPMIIFAKDGHFALEELAQAGYEVVGLDWTVAPEKARERVGKTVTLQGNLDPCALYASEEEIGKLVQQMLNDFGPQRYIANLGHGLYPDMDPEHVGAFVDAVHKHSRLLRQN.

Met1 bears the N-acetylmethionine mark. The coproporphyrinogen I site is built by Arg37, Ala39, Arg41, Arg50, Asp86, Tyr164, Ser219, and His339. Positions 37, 39, and 41 each coordinate coproporphyrinogen III. Residues Asp86, Tyr164, Ser219, and His339 each coordinate coproporphyrinogen III.

This sequence belongs to the uroporphyrinogen decarboxylase family. As to quaternary structure, homodimer.

It is found in the cytoplasm. Its subcellular location is the cytosol. The catalysed reaction is uroporphyrinogen III + 4 H(+) = coproporphyrinogen III + 4 CO2. The enzyme catalyses uroporphyrinogen I + 4 H(+) = coproporphyrinogen I + 4 CO2. Its pathway is porphyrin-containing compound metabolism; protoporphyrin-IX biosynthesis; coproporphyrinogen-III from 5-aminolevulinate: step 4/4. Functionally, catalyzes the sequential decarboxylation of the four acetate side chains of uroporphyrinogen to form coproporphyrinogen and participates in the fifth step in the heme biosynthetic pathway. Isomer I or isomer III of uroporphyrinogen may serve as substrate, but only coproporphyrinogen III can ultimately be converted to heme. In vitro also decarboxylates pentacarboxylate porphyrinogen I. This chain is Uroporphyrinogen decarboxylase, found in Ovis aries (Sheep).